The chain runs to 123 residues: Methylmalonyl-CoA carboxyltransferase 1.3S subunit (123 aa).

Positions 46–123 (GAGAGKAGEG…QGGQGLIKIG (78 aa)) constitute a Biotinyl-binding domain. Residue lysine 89 is modified to N6-biotinyllysine.

As to quaternary structure, transcarboxylase is composed of three subunits: 1.3S, 5S, and 12S. The core of the enzyme is composed of six 12S subunits. On each side of the core there are three pairs of 5S subunits. Each 5S dimer is attached to the core by two 1.3S subunits. Thus the total number of chains is 30 (6 + 12 + 12).

The catalysed reaction is (S)-methylmalonyl-CoA + pyruvate = propanoyl-CoA + oxaloacetate. The biotinyl 1.3S subunit serves as a carboxyl carrier between the substrate-binding sites on the 12S and 5S subunits. The chain is Methylmalonyl-CoA carboxyltransferase 1.3S subunit from Propionibacterium freudenreichii subsp. shermanii.